Reading from the N-terminus, the 381-residue chain is tRNA-cytidine(32) 2-sulfurtransferase (381 aa).

The PP-loop motif signature appears at 101–106; the sequence is SGGKDS. 3 residues coordinate [4Fe-4S] cluster: cysteine 176, cysteine 179, and cysteine 267.

It belongs to the TtcA family. In terms of assembly, homodimer. It depends on Mg(2+) as a cofactor. The cofactor is [4Fe-4S] cluster.

The protein localises to the cytoplasm. The catalysed reaction is cytidine(32) in tRNA + S-sulfanyl-L-cysteinyl-[cysteine desulfurase] + AH2 + ATP = 2-thiocytidine(32) in tRNA + L-cysteinyl-[cysteine desulfurase] + A + AMP + diphosphate + H(+). The protein operates within tRNA modification. Its function is as follows. Catalyzes the ATP-dependent 2-thiolation of cytidine in position 32 of tRNA, to form 2-thiocytidine (s(2)C32). The sulfur atoms are provided by the cysteine/cysteine desulfurase (IscS) system. The protein is tRNA-cytidine(32) 2-sulfurtransferase of Psychrobacter cryohalolentis (strain ATCC BAA-1226 / DSM 17306 / VKM B-2378 / K5).